Reading from the N-terminus, the 871-residue chain is Tegument protein UL47 homolog (871 aa).

The interval 1–212 (MDQHHGARGG…DEDDMEVIRD (212 aa)) is disordered. The Nuclear localization signal signature appears at 13–33 (IRRPRRSIESRSHPFRATGNT). Polar residues-rich tracts occupy residues 30–41 (TGNTQRTYSTPR) and 59–81 (EQAS…STSF). Acidic residues-rich tracts occupy residues 114–134 (SSSE…EEDQ), 146–155 (SSDENDEEED), and 185–207 (SESE…EDDM).

The protein belongs to the alphaherpesvirinae HHV-1 UL47 family. Interacts with US3 kinase. Interacts with UL31 and UL34; these interactions seem important for efficient virion nuclear egress. Interacts with UL41/VHS. In terms of processing, phosphorylated by US3. This phosphorylation is required for proper nuclear localization.

Its subcellular location is the virion tegument. The protein localises to the host nucleus. It localises to the host cytoplasm. Tegument protein that can bind to various RNA transcripts. Plays a role in the attenuation of selective viral and cellular mRNA degradation by modulating the activity of host shutoff RNase UL41/VHS. Also plays a role in the primary envelopment of virions in the perinuclear space, probably by interacting with two nuclear egress proteins UL31 and UL34. This chain is Tegument protein UL47 homolog, found in Equine herpesvirus 1 (strain V592) (EHV-1).